The following is a 202-amino-acid chain: 3-isopropylmalate dehydratase small subunit (202 aa).

The protein belongs to the LeuD family. LeuD type 1 subfamily. As to quaternary structure, heterodimer of LeuC and LeuD.

The enzyme catalyses (2R,3S)-3-isopropylmalate = (2S)-2-isopropylmalate. It participates in amino-acid biosynthesis; L-leucine biosynthesis; L-leucine from 3-methyl-2-oxobutanoate: step 2/4. Functionally, catalyzes the isomerization between 2-isopropylmalate and 3-isopropylmalate, via the formation of 2-isopropylmaleate. This Novosphingobium aromaticivorans (strain ATCC 700278 / DSM 12444 / CCUG 56034 / CIP 105152 / NBRC 16084 / F199) protein is 3-isopropylmalate dehydratase small subunit.